Consider the following 919-residue polypeptide: Transcriptional regulatory protein EDS1 (919 aa).

The tract at residues 1-54 (MSHHVPNLYGTPIRDPHEHKRNSASMGEVNQSVSSRNCERGSEKGTKQRKKASR) is disordered. The span at 23–36 (SASMGEVNQSVSSR) shows a compositional bias: polar residues. Basic and acidic residues predominate over residues 37 to 46 (NCERGSEKGT). A DNA-binding region (zn(2)-C6 fungal-type) is located at residues 56–85 (CDQCRRKRIKCRFDKHTGVCQGCLEVGEKC). Residues 297–338 (AGCPNKKLGTDGRSDKWDKNSTWKPVYRSSNPSHPSTEKNVS) are disordered. The span at 304-317 (LGTDGRSDKWDKNS) shows a compositional bias: basic and acidic residues. The segment covering 318–338 (TWKPVYRSSNPSHPSTEKNVS) has biased composition (polar residues).

In terms of assembly, binds DNA in a sequence-specific manner.

The protein resides in the nucleus. The chain is Transcriptional regulatory protein EDS1 (EDS1) from Saccharomyces cerevisiae (strain Lalvin EC1118 / Prise de mousse) (Baker's yeast).